Consider the following 415-residue polypeptide: Glucose-1-phosphate adenylyltransferase (415 aa).

Residues Tyr100, Gly165, 182–183, and Ser200 contribute to the alpha-D-glucose 1-phosphate site; that span reads EK.

Belongs to the bacterial/plant glucose-1-phosphate adenylyltransferase family. As to quaternary structure, homotetramer.

The enzyme catalyses alpha-D-glucose 1-phosphate + ATP + H(+) = ADP-alpha-D-glucose + diphosphate. It participates in glycan biosynthesis; glycogen biosynthesis. Its function is as follows. Involved in the biosynthesis of ADP-glucose, a building block required for the elongation reactions to produce glycogen. Catalyzes the reaction between ATP and alpha-D-glucose 1-phosphate (G1P) to produce pyrophosphate and ADP-Glc. The protein is Glucose-1-phosphate adenylyltransferase of Bifidobacterium animalis subsp. lactis (strain AD011).